A 168-amino-acid chain; its full sequence is Lipid transfer protein EARLI 1 (168 aa).

The first 25 residues, 1–25 (MASKNSASIALFFALNIIFFTLTAA), serve as a signal peptide directing secretion. Residues 32 to 81 (PSPKHKPVPSPKPKPVPSPKPKPVPSPSVPSPSVPSPNPRPVTPPRTPGS) are disordered. One copy of the A-1 repeat lies at 34-41 (PKHKPVPS). The 3 X 8 AA repeats A of P-K-[HP]-K-P-V-P-S stretch occupies residues 34 to 57 (PKHKPVPSPKPKPVPSPKPKPVPS). Positions 39–78 (VPSPKPKPVPSPKPKPVPSPSVPSPSVPSPNPRPVTPPRT) are enriched in pro residues. An A-2 repeat occupies 42–49 (PKPKPVPS). Residues 50-57 (PKPKPVPS) form an A-3 repeat. The stretch at 58–62 (PSVPS) is one B-1 repeat. The tract at residues 58-67 (PSVPSPSVPS) is 2 X 58 AA tandem repeats B of P-S-V-P-S. The B-2 repeat unit spans residues 63–67 (PSVPS).

It belongs to the plant LTP family. PEARLI1 subfamily. Mostly expressed in aerial part of seedlings, and, to a lower extent, in roots. Higher basal levels in early-flowering ecotypes.

The protein resides in the secreted. Its subcellular location is the cell wall. Its function is as follows. Probable lipid transfer protein (LTP). May improve freezing survival. Seems to control the flowering process and lignin synthesis. Has an auxiliary role for germinability and early seedling development under low temperature and salt stress conditions, probably in an abscisic acid- (ABA) dependent manner. Confers resistance to Botrytis cinerea and exhibits anti-fungal activity, at least against S.cerevisiae, B.cinerea and Fusarium oxysporum, probably by increasing their membrane permeability. In Arabidopsis thaliana (Mouse-ear cress), this protein is Lipid transfer protein EARLI 1 (EARLI1).